The following is a 252-amino-acid chain: 3-dehydroquinate dehydratase (252 aa).

Residues serine 21, 46-48 (EWR), and arginine 82 each bind 3-dehydroquinate. Catalysis depends on histidine 143, which acts as the Proton donor/acceptor. Lysine 170 functions as the Schiff-base intermediate with substrate in the catalytic mechanism. 3-dehydroquinate contacts are provided by arginine 213, serine 232, and glutamine 236.

Belongs to the type-I 3-dehydroquinase family. In terms of assembly, homodimer.

The catalysed reaction is 3-dehydroquinate = 3-dehydroshikimate + H2O. It participates in metabolic intermediate biosynthesis; chorismate biosynthesis; chorismate from D-erythrose 4-phosphate and phosphoenolpyruvate: step 3/7. Its function is as follows. Involved in the third step of the chorismate pathway, which leads to the biosynthesis of aromatic amino acids. Catalyzes the cis-dehydration of 3-dehydroquinate (DHQ) and introduces the first double bond of the aromatic ring to yield 3-dehydroshikimate. The sequence is that of 3-dehydroquinate dehydratase from Salmonella choleraesuis (strain SC-B67).